A 151-amino-acid chain; its full sequence is MAENSPLKAHNLRPAPGAKTAKTRVGRGEASKGKTAGRGTKGTKARYQVPERFEGGQMPLHMRLPKLKGFKNPFRTEYQVVNLDKLATLYPEGGEVTVADLVAKGAVRNNHLVKVLGQGEISVALQVSVDAVSGSAKEKITAAGGTVTELV.

The interval 1-60 (MAENSPLKAHNLRPAPGAKTAKTRVGRGEASKGKTAGRGTKGTKARYQVPERFEGGQMPL) is disordered.

This sequence belongs to the universal ribosomal protein uL15 family. In terms of assembly, part of the 50S ribosomal subunit.

In terms of biological role, binds to the 23S rRNA. The sequence is that of Large ribosomal subunit protein uL15 from Streptomyces griseus subsp. griseus (strain JCM 4626 / CBS 651.72 / NBRC 13350 / KCC S-0626 / ISP 5235).